Here is a 185-residue protein sequence, read N- to C-terminus: Elongation factor P (185 aa).

The protein belongs to the elongation factor P family.

The protein resides in the cytoplasm. It functions in the pathway protein biosynthesis; polypeptide chain elongation. Involved in peptide bond synthesis. Stimulates efficient translation and peptide-bond synthesis on native or reconstituted 70S ribosomes in vitro. Probably functions indirectly by altering the affinity of the ribosome for aminoacyl-tRNA, thus increasing their reactivity as acceptors for peptidyl transferase. The polypeptide is Elongation factor P (Nitratidesulfovibrio vulgaris (strain DP4) (Desulfovibrio vulgaris)).